Consider the following 196-residue polypeptide: Retinol-binding protein 4 (196 aa).

The first 21 residues, 1 to 21 (MAYTWRALLLLALAFLGSSMA), serve as a signal peptide directing secretion. 3 cysteine pairs are disulfide-bonded: Cys25–Cys181, Cys91–Cys195, and Cys141–Cys150. A substrate-binding site is contributed by Gln119.

It belongs to the calycin superfamily. Lipocalin family. Interacts with TTR. Interaction with TTR prevents its loss by filtration through the kidney glomeruli. Interacts with STRA6.

It is found in the secreted. Functionally, retinol-binding protein that mediates retinol transport in blood plasma. Delivers retinol from the liver stores to the peripheral tissues. Transfers the bound all-trans retinol to STRA6, that then facilitates retinol transport across the cell membrane. This Gallus gallus (Chicken) protein is Retinol-binding protein 4 (RBP4).